Consider the following 893-residue polypeptide: POU domain protein 2, isoform B (893 aa).

Residues 586–668 (QMKQQQREDP…STPKPTSGLT (83 aa)) are disordered. Residues 602–617 (PLAKSPLRSPSLSPVP) show a composition bias toward low complexity. Residues 623 to 646 (QQRTPPNSMTANSLGMSSAVMTPN) are compositionally biased toward polar residues. Residues 647–665 (TPSMQQQPQLQQSTPKPTS) show a composition bias toward low complexity. The POU-specific domain occupies 681–755 (EETTDLEELE…LLQKWLEDAD (75 aa)). The segment at residues 786–845 (RRKKRTSIETTVRTTLEKAFLMNCKPTSEEISQLSERLNMDKEVIRVWFCNRRQKEKRIN) is a DNA-binding region (homeobox).

This sequence belongs to the POU transcription factor family. Class-2 subfamily. In terms of tissue distribution, initial expression in cellular blastoderm stage, then in ectodermal stripes during germband extension. Broad expression in the neuroectoderm followed by limitation to discrete subsets of CNS cells, and expression in specific PNS neurons and support cells.

It is found in the nucleus. Functionally, DNA-binding regulatory protein implicated in early development. Involved in neuronal cell fate decision. May act as an octamer-dependent activator of transcription. Could also play an early role in specific ectodermal cells, and a subsequent role in the embryonic nervous system. The sequence is that of POU domain protein 2, isoform B from Drosophila melanogaster (Fruit fly).